We begin with the raw amino-acid sequence, 394 residues long: Elongation factor Tu (394 aa).

Residues 10–204 (KPHINVGTIG…SLDKYIPIPV (195 aa)) form the tr-type G domain. A G1 region spans residues 19-26 (GHVDHGKT). A GTP-binding site is contributed by 19–26 (GHVDHGKT). Thr26 is a Mg(2+) binding site. The G2 stretch occupies residues 60–64 (GITIN). The segment at 81–84 (DCPG) is G3. GTP is bound by residues 81-85 (DCPGH) and 136-139 (NKCD). Positions 136–139 (NKCD) are G4. A G5 region spans residues 174–176 (SAL).

Belongs to the TRAFAC class translation factor GTPase superfamily. Classic translation factor GTPase family. EF-Tu/EF-1A subfamily. In terms of assembly, monomer.

Its subcellular location is the cytoplasm. The catalysed reaction is GTP + H2O = GDP + phosphate + H(+). GTP hydrolase that promotes the GTP-dependent binding of aminoacyl-tRNA to the A-site of ribosomes during protein biosynthesis. This is Elongation factor Tu from Buchnera aphidicola subsp. Cinara cedri (strain Cc).